We begin with the raw amino-acid sequence, 475 residues long: Splicing factor U2AF 65 kDa subunit (475 aa).

The segment at 1-90 (MSDFDEFERQ…RHEKKKKVRK (90 aa)) is disordered. Ser-2 is subject to N-acetylserine. A Phosphoserine modification is found at Ser-2. Residues 2–93 (SDFDEFERQL…KKKKVRKYWD (92 aa)) form a required for interaction with PRPF19 region. Basic and acidic residues predominate over residues 7 to 22 (FERQLNENKQERDKEN). Lys-15 bears the 5-hydroxylysine; by JMJD6; alternate mark. Residue Lys-15 forms a Glycyl lysine isopeptide (Lys-Gly) (interchain with G-Cter in SUMO2); alternate linkage. Residues 17-47 (ERDKENRHRKRSHSRSRSRDRKRRSRSRDRR) form a necessary and sufficient to stimulate pre-mRNAs 3'-end cleavage in a CFIm complex-dependent manner region. Over residues 23–46 (RHRKRSHSRSRSRDRKRRSRSRDR) the composition is skewed to basic residues. Positions 47-56 (RNRDQRSASR) are enriched in basic and acidic residues. A Glycyl lysine isopeptide (Lys-Gly) (interchain with G-Cter in SUMO2); alternate cross-link involves residue Lys-70. Lys-70 carries the N6-acetyllysine; alternate modification. Ser-79 carries the post-translational modification Phosphoserine. Over residues 79-89 (SPRHEKKKKVR) the composition is skewed to basic residues. RRM domains lie at 149–231 (RRLY…RPHD), 259–337 (HKLF…RASV), and 385–466 (LPEE…YCDP). Lys-276 bears the 5-hydroxylysine; by JMJD6 mark. The residue at position 294 (Ser-294) is a Phosphoserine.

The protein belongs to the splicing factor SR family. As to quaternary structure, interacts with U2AF1L4. Heterodimer with U2AF1. Binds unphosphorylated SF1. Interacts with SCAF11 and SNW1. Interacts with ZRSR2/U2AF1-RS2. Interacts with RBM17. Interacts with PRPF19; the interaction is direct. Interacts with POLR2A (via the C-terminal domain); recruits PRPF19 and the Prp19 complex to the pre-mRNA. Interacts with KHDC4 (Isoform 2). Interacts with ZRSR2. Interacts with the SF3B complex composed of SF3B1, SF3B2, SF3B3, SF3B4, SF3B5, SF3B6 and PHF5A. Interacts (via N-terminus) with CPSF7 (via C-terminus); this interaction stimulates pre-mRNA 3'-end processing by promoting the recruitment of the CFIm complex to cleavage and polyadenylation signals. Interacts with ARGLU1; interaction may be involved in ARGLU1-mediated modulation of alternative splicing. In terms of processing, lysyl-hydroxylation at Lys-15 and Lys-276 affects the mRNA splicing activity of the protein, leading to regulate some, but not all, alternative splicing events.

The protein localises to the nucleus. Plays a role in pre-mRNA splicing and 3'-end processing. By recruiting PRPF19 and the PRP19C/Prp19 complex/NTC/Nineteen complex to the RNA polymerase II C-terminal domain (CTD), and thereby pre-mRNA, may couple transcription to splicing. Induces cardiac troponin-T (TNNT2) pre-mRNA exon inclusion in muscle. Regulates the TNNT2 exon 5 inclusion through competition with MBNL1. Binds preferentially to a single-stranded structure within the polypyrimidine tract of TNNT2 intron 4 during spliceosome assembly. Required for the export of mRNA out of the nucleus, even if the mRNA is encoded by an intron-less gene. Represses the splicing of MAPT/Tau exon 10. Positively regulates pre-mRNA 3'-end processing by recruiting the CFIm complex to cleavage and polyadenylation signals. The chain is Splicing factor U2AF 65 kDa subunit (U2AF2) from Homo sapiens (Human).